Consider the following 1096-residue polypeptide: Inactive phospholipase C-like protein 1 (1096 aa).

Residues 1–101 (MAEGAASREA…KKTVSFSSMP (101 aa)) are disordered. Residues 26-41 (GADAASGDAAPEASGG) are compositionally biased toward low complexity. Serine 48 and serine 78 each carry phosphoserine. The interval 83–222 (PSNQKCGGRK…NIWVSGLRYL (140 aa)) is interaction with PPP1C. The residue at position 94 (threonine 94) is a Phosphothreonine. Residue serine 96 is modified to Phosphoserine. The region spanning 114–224 (SFMQAGCELK…WVSGLRYLVS (111 aa)) is the PH domain. The PI-PLC X-box domain maps to 399–543 (QDMTQPLSHY…LKHMIIVKGK (145 aa)). The interval 544 to 568 (KLPSESDLLEGEVTDEDEEAEMSRR) is interaction with GABA A beta subunit. The residue at position 557 (threonine 557) is a Phosphothreonine. Serine 570 is subject to Phosphoserine. Residues 586 to 702 (LSDLVSICKS…GYVLRPSIMR (117 aa)) form the PI-PLC Y-box domain. The C2 domain maps to 702–831 (RDEVSYFSAN…PGYRHVPLRS (130 aa)). Positions 1040–1060 (DLLKNAKNEAVENIKQIQLAC) form a coiled coil. The segment at 1067–1096 (KGPGSAAEAKGKRSLEAIEEKESSEENGKL) is disordered. The segment covering 1075 to 1096 (AKGKRSLEAIEEKESSEENGKL) has biased composition (basic and acidic residues). Serine 1080 carries the post-translational modification Phosphoserine.

This sequence belongs to the PRIP family. Interacts with PPP2CA, GABA receptor beta subunits, GABA receptor gamma-2 subunits. Interacts with Ins(1,4,5)P3, Ins(1,4,5,6)P4, GABARAP, and PPP1C. May form a ternary complex with GABA receptor beta subunit and GABARAP. The formation of a ternary complex with GABA receptor beta subunit and GABARAP could be the key step for facilitating the association of GABARAP with the GABA receptor gamma-2 subunit and to allow it to be transported at the right destination. In terms of processing, phosphorylation of Thr-94 resulted in dissociation of PPP1C from PRIP1. In vitro, phosphorylated by the catalytic subunit of PKA. Expressed in brain. Found in the granular cell and Purkinje cell layers in the cerebellum; and in the hippocampal pyramidal cells, dentate granule cells and pyramidal granule cells of the cerebral cortex in the cerebrum.

Its subcellular location is the cytoplasm. Its function is as follows. Involved in an inositol phospholipid-based intracellular signaling cascade. Shows no PLC activity to phosphatidylinositol 4,5-bisphosphate and phosphatidylinositol. Component in the phospho-dependent endocytosis process of GABA A receptor. Acts as an inhibitor of PPP1C. This is Inactive phospholipase C-like protein 1 (Plcl1) from Rattus norvegicus (Rat).